Consider the following 122-residue polypeptide: MKKERRQKSFHRGVRAEKWAAWWLRFKWFHIAEIRFKTKCGEIDLIARRGNLVLIVEVKARSTLAEAMAAVSRMNERRIEAAADIWLARQKDRALLDVRFDLIAILPWRLPQHIPAFFTSDK.

It belongs to the UPF0102 family.

The sequence is that of UPF0102 protein BQ09720 from Bartonella quintana (strain Toulouse) (Rochalimaea quintana).